A 333-amino-acid polypeptide reads, in one-letter code: Transaldolase NQM1 (333 aa).

K144 acts as the Schiff-base intermediate with substrate in catalysis.

This sequence belongs to the transaldolase family. Type 1 subfamily. As to quaternary structure, homodimer.

It catalyses the reaction D-sedoheptulose 7-phosphate + D-glyceraldehyde 3-phosphate = D-erythrose 4-phosphate + beta-D-fructose 6-phosphate. The protein operates within carbohydrate degradation; pentose phosphate pathway; D-glyceraldehyde 3-phosphate and beta-D-fructose 6-phosphate from D-ribose 5-phosphate and D-xylulose 5-phosphate (non-oxidative stage): step 2/3. Its function is as follows. Transaldolase is important for the balance of metabolites in the pentose-phosphate pathway. This is Transaldolase NQM1 (NQM1) from Saccharomyces cerevisiae (strain ATCC 204508 / S288c) (Baker's yeast).